A 184-amino-acid chain; its full sequence is Ribosome-recycling factor (184 aa).

This sequence belongs to the RRF family.

The protein resides in the cytoplasm. In terms of biological role, responsible for the release of ribosomes from messenger RNA at the termination of protein biosynthesis. May increase the efficiency of translation by recycling ribosomes from one round of translation to another. The polypeptide is Ribosome-recycling factor (Acinetobacter baumannii (strain AB307-0294)).